The primary structure comprises 1627 residues: Surface protein G (1627 aa).

The first 50 residues, 1-50 (MRDKKGPVNKRVDFLSNKLNKYSIRKFTVGTASILIGSLMYLGTQQEAEA), serve as a signal peptide directing secretion. A YSIRK-G/S signaling motif motif is present at residues 22 to 33 (YSIRKFTVGTAS). The interval 51-418 (AENNIENPTT…KGSEFTFTPE (368 aa)) is ligand binding A region, squamous nasal epithelial cell binding. Disordered stretches follow at residues 74–143 (EVTN…VRKA), 440–467 (KFNP…TTPT), and 496–1601 (EYGP…TGLE). Basic and acidic residues-rich tracts occupy residues 96–120 (DTIE…KEVA), 451–461 (KVTREGQKGEK), 505–523 (GHRD…EEVP), 554–570 (SIVE…RKFN), 579–589 (KVTREGQKGEK), 606–619 (SKGE…KDPI), 633–651 (GHRD…EEVP), 682–698 (SIVE…RKFN), 707–717 (KVTREGQKGEK), 736–747 (GEPKEEITKDPI), 761–779 (GHRD…EEVP), 810–826 (SIVE…RKFN), 835–845 (KVTREGQKGEK), 862–875 (SKGE…KDPI), 889–907 (GHRD…EEVP), 938–954 (SIVE…RKFN), 963–973 (KVTREGQKGEK), 990–1003 (SKGE…KDPI), 1017–1035 (GHRD…EEVP), 1066–1082 (SIVE…RKFN), 1091–1101 (KVTREGQKGEK), 1118–1131 (SKGE…KDPI), 1145–1163 (GHRD…EEVP), 1194–1210 (SIVE…RKFN), 1219–1229 (KVTREGQKGEK), 1246–1259 (SKGE…KDPI), 1273–1291 (GHRD…EEVP), 1322–1338 (SIVE…RKFN), 1347–1357 (KVTREGQKGEK), 1374–1387 (SKGE…KDPV), 1431–1442 (KVIEEPVDDVIK), and 1459–1478 (FETK…RVKQ). The G5 1 domain occupies 419–501 (APKTITELEK…NELTEYGPET (83 aa)). Positions 547 to 629 (YGPVKGDSIV…NELTEYGPET (83 aa)) constitute a G5 2 domain. The region spanning 675-757 (YGPVKGDSIV…NELTEYGPET (83 aa)) is the G5 3 domain. Residues 803 to 885 (YGPVKGDSIV…NELTEYGPET (83 aa)) form the G5 4 domain. Positions 931–1013 (YGPVKGDSIV…NELTEYGPET (83 aa)) constitute a G5 5 domain. The G5 6 domain maps to 1059–1141 (YGPVKGDSIV…NELTEYGPET (83 aa)). One can recognise a G5 7 domain in the interval 1187-1269 (YGPVKGDSIV…NELTEYGPET (83 aa)). Residues 1315-1397 (YGPVKGDSIV…NELTEFGGEK (83 aa)) form the G5 8 domain. Positions 1443–1525 (HGPKTGTPET…DKIVEFGGEK (83 aa)) constitute a G5 9 domain. Residues 1481 to 1495 (QPGSKTITTPITVNP) show a composition bias toward polar residues. A compositionally biased stretch (basic and acidic residues) spans 1509-1539 (EITKQPVDKIVEFGGEKPKDPKGPENPEKPS). The LPXTG sorting signal signature appears at 1595–1599 (LPKTG). Thr1598 is modified (pentaglycyl murein peptidoglycan amidated threonine). Positions 1599–1627 (GLESTQKGLIFSSIIGIAGLMLLARRRKN) are cleaved as a propeptide — removed by sortase.

Its subcellular location is the secreted. It localises to the cell wall. Functionally, promotes adhesion of bacterial cells to human squamous nasal epithelial cells, a phenomenon which is likely to be important in nasal colonization. Forms short, extremely dense and thin fibrils all over the bacterial surface. Does not bind to either buccal cells or non-differentiated keratinocytes. Promotes cellular aggregation leading to biofilm formation. The polypeptide is Surface protein G (sasG) (Staphylococcus aureus (strain NCTC 8325 / PS 47)).